Reading from the N-terminus, the 260-residue chain is Snake venom serine protease homolog (260 aa).

The N-terminal stretch at 1 to 18 (MVLIRVLANLLILQLSYA) is a signal peptide. Residues 19–24 (QKASEL) constitute a propeptide that is removed on maturation. One can recognise a Peptidase S1 domain in the interval 25 to 251 (IIGGDECNIN…YTEWIRSIIA (227 aa)). Disulfide bonds link Cys-31/Cys-165, Cys-52/Cys-68, Cys-100/Cys-258, Cys-144/Cys-212, Cys-176/Cys-191, and Cys-202/Cys-227. The N-linked (GlcNAc...) asparagine glycan is linked to Asn-83.

Belongs to the peptidase S1 family. Snake venom subfamily. As to expression, expressed by the venom gland.

The protein resides in the secreted. Functionally, snake venom serine protease homolog that may act in the hemostasis system of the prey. This is Snake venom serine protease homolog from Bothrops jararacussu (Jararacussu).